A 415-amino-acid chain; its full sequence is MPELLNKTKTNLNFENIKILIKKFQSPFWVYDSNIIHKKINLLKEFDIVRFAQKACSNIHILRLMKQKNIKVDAVSLGEIERALVAGFKPNSNEIIFTADLFDEETLSKVIDFKIPVNAGSIDMLEQLGKLSPGHHVWLRINPGFGHGHSKKTNTGGENSKHGIWNPRLAIPIIKKYKLKLIGLHMHIGSGVNYKHLKKVGQAMIEKAMEINEKILFISAGGGLPIPYTFNEKPIDTKKYFIIWDEARKKISRFLNTPIQLEIEPGRFLVAESGILISQVRAIKKMGDKNFVLIDAGFNDLMRPTMYGSYHHVSVVTKDDRNIHETETIDTIIGGPLCESGDIFTQKEGGNITTRKLPILKIGDYLIFHDVGAYGASMSSNYNTRPLIQEILLENNTFRTIRRRQKINELLNLEK.

At K54 the chain carries N6-(pyridoxal phosphate)lysine. Residues G223 and 264 to 267 contribute to the pyridoxal 5'-phosphate site; that span reads EPGR. The substrate site is built by R267, R303, and Y307. Residue C338 is the Proton donor of the active site. Positions 339 and 374 each coordinate substrate. Y374 provides a ligand contact to pyridoxal 5'-phosphate.

The protein belongs to the Orn/Lys/Arg decarboxylase class-II family. LysA subfamily. In terms of assembly, homodimer. The cofactor is pyridoxal 5'-phosphate.

The enzyme catalyses meso-2,6-diaminopimelate + H(+) = L-lysine + CO2. It functions in the pathway amino-acid biosynthesis; L-lysine biosynthesis via DAP pathway; L-lysine from DL-2,6-diaminopimelate: step 1/1. Its function is as follows. Specifically catalyzes the decarboxylation of meso-diaminopimelate (meso-DAP) to L-lysine. This chain is Diaminopimelate decarboxylase, found in Buchnera aphidicola subsp. Schizaphis graminum (strain Sg).